The following is a 128-amino-acid chain: Small ribosomal subunit protein bS6 (128 aa).

This sequence belongs to the bacterial ribosomal protein bS6 family.

In terms of biological role, binds together with bS18 to 16S ribosomal RNA. This chain is Small ribosomal subunit protein bS6 (rpsF), found in Thermotoga maritima (strain ATCC 43589 / DSM 3109 / JCM 10099 / NBRC 100826 / MSB8).